We begin with the raw amino-acid sequence, 380 residues long: Cytochrome b (380 aa).

The next 4 helical transmembrane spans lie at 34-54 (FGSL…LLAA), 78-99 (WLIR…YMHI), 114-134 (WNTG…GYVL), and 179-199 (FFTL…IHLT). Residues H84 and H98 each coordinate heme b. H183 and H197 together coordinate heme b. Position 202 (H202) interacts with a ubiquinone. The next 4 membrane-spanning stretches (helical) occupy residues 227–247 (LKDT…ALFS), 289–309 (LGGV…PLLH), 321–341 (LSQL…WVGS), and 348–368 (FIII…ILFP).

Belongs to the cytochrome b family. As to quaternary structure, the cytochrome bc1 complex contains 11 subunits: 3 respiratory subunits (MT-CYB, CYC1 and UQCRFS1), 2 core proteins (UQCRC1 and UQCRC2) and 6 low-molecular weight proteins (UQCRH/QCR6, UQCRB/QCR7, UQCRQ/QCR8, UQCR10/QCR9, UQCR11/QCR10 and a cleavage product of UQCRFS1). This cytochrome bc1 complex then forms a dimer. Heme b serves as cofactor.

Its subcellular location is the mitochondrion inner membrane. In terms of biological role, component of the ubiquinol-cytochrome c reductase complex (complex III or cytochrome b-c1 complex) that is part of the mitochondrial respiratory chain. The b-c1 complex mediates electron transfer from ubiquinol to cytochrome c. Contributes to the generation of a proton gradient across the mitochondrial membrane that is then used for ATP synthesis. This is Cytochrome b (MT-CYB) from Balearica regulorum (Grey crowned-crane).